A 494-amino-acid chain; its full sequence is Splicing regulatory glutamine/lysine-rich protein 1 (494 aa).

The RRM domain maps to 69-145 (RTVYVGNLNS…RPLKINHSNN (77 aa)). Residues Ser-174 and Ser-187 each carry the phosphoserine modification. The tract at residues 176–494 (ISAAIEPESG…ERLCSTADAV (319 aa)) is disordered. A compositionally biased stretch (basic and acidic residues) spans 183-192 (ESGKSNERKG). Composition is skewed to basic residues over residues 193 to 230 (GRSR…RSRS) and 238 to 262 (SKSP…RSRD). Positions 263 to 340 (KRKDTREKVK…DRSKEADEKR (78 aa)) are enriched in basic and acidic residues. Thr-348 carries the post-translational modification Phosphothreonine. The span at 357 to 373 (RRSRSASRERRRRRSRS) shows a compositional bias: basic residues. Basic and acidic residues-rich tracts occupy residues 404–453 (REKE…KEAD) and 463–474 (KDTARTEEESKA).

This sequence belongs to the splicing factor SR family. In terms of assembly, interacts with SREK1IP1. Homodimer. Binds SFRS1, SFRS2, SFRS3 and SFRS6. Interacts with the spliceosome. Ubiquitous. Detected in liver, brain, lung, spleen, testis and pancreas.

The protein resides in the nucleus. Functionally, participates in the regulation of alternative splicing by modulating the activity of other splice facors. Inhibits the splicing activity of SFRS1, SFRS2 and SFRS6. Augments the splicing activity of SFRS3. This Rattus norvegicus (Rat) protein is Splicing regulatory glutamine/lysine-rich protein 1 (Srek1).